Here is a 162-residue protein sequence, read N- to C-terminus: MTAIQQFFKTFFLTELLKGLALTGRYTFKRKFTVQFPEEKTPISPRFRGLHALRRYENGEERCIACKLCEAVCPAMAITIESETRADNTRRTTRYDIDLTKCIFCGFCEESCPVDSIVETQILEYHGEKRGDLYFTKEMLLAVGDRYEKEIAAAKAADARYR.

4Fe-4S ferredoxin-type domains are found at residues Arg-54–Glu-83 and Thr-93–Ile-122. [4Fe-4S] cluster is bound by residues Cys-63, Cys-66, Cys-69, Cys-73, Cys-102, Cys-105, Cys-108, and Cys-112.

This sequence belongs to the complex I 23 kDa subunit family. As to quaternary structure, NDH-1 is composed of 14 different subunits. Subunits NuoA, H, J, K, L, M, N constitute the membrane sector of the complex. It depends on [4Fe-4S] cluster as a cofactor.

It is found in the cell inner membrane. The enzyme catalyses a quinone + NADH + 5 H(+)(in) = a quinol + NAD(+) + 4 H(+)(out). Functionally, NDH-1 shuttles electrons from NADH, via FMN and iron-sulfur (Fe-S) centers, to quinones in the respiratory chain. The immediate electron acceptor for the enzyme in this species is believed to be ubiquinone. Couples the redox reaction to proton translocation (for every two electrons transferred, four hydrogen ions are translocated across the cytoplasmic membrane), and thus conserves the redox energy in a proton gradient. This Burkholderia thailandensis (strain ATCC 700388 / DSM 13276 / CCUG 48851 / CIP 106301 / E264) protein is NADH-quinone oxidoreductase subunit I.